A 185-amino-acid chain; its full sequence is Ribosome-recycling factor (185 aa).

The protein belongs to the RRF family.

It localises to the cytoplasm. Responsible for the release of ribosomes from messenger RNA at the termination of protein biosynthesis. May increase the efficiency of translation by recycling ribosomes from one round of translation to another. This chain is Ribosome-recycling factor, found in Serratia proteamaculans (strain 568).